Consider the following 165-residue polypeptide: Phosphopantetheine adenylyltransferase (165 aa).

A substrate-binding site is contributed by Ser-10. Residues 10-11 (SF) and His-18 contribute to the ATP site. 3 residues coordinate substrate: Lys-42, Leu-74, and Arg-88. Residues 89–91 (GLR), Glu-99, and 124–130 (YSFISSS) each bind ATP.

This sequence belongs to the bacterial CoaD family. As to quaternary structure, homohexamer. It depends on Mg(2+) as a cofactor.

The protein resides in the cytoplasm. The catalysed reaction is (R)-4'-phosphopantetheine + ATP + H(+) = 3'-dephospho-CoA + diphosphate. Its pathway is cofactor biosynthesis; coenzyme A biosynthesis; CoA from (R)-pantothenate: step 4/5. Reversibly transfers an adenylyl group from ATP to 4'-phosphopantetheine, yielding dephospho-CoA (dPCoA) and pyrophosphate. This Macrococcus caseolyticus (strain JCSC5402) (Macrococcoides caseolyticum) protein is Phosphopantetheine adenylyltransferase.